The sequence spans 229 residues: Clathrin light chain B (229 aa).

2 stretches are compositionally biased toward low complexity: residues 1–17 and 45–58; these read MAEDFGFFSSSESGAPE and GAPAASQVASAQPG. The segment at 1–80 is disordered; it reads MAEDFGFFSS…TVNGDVFQEA (80 aa). Ser-11 and Ser-13 each carry phosphoserine. Positions 93-155 are involved in binding clathrin heavy chain; it reads ADRLTQEPES…QVEKNKINNR (63 aa). Thr-187 is subject to Phosphothreonine. Cys-199 and Cys-209 are disulfide-bonded. An N6-acetyllysine modification is found at Lys-204. At Ser-217 the chain carries Phosphoserine.

The protein belongs to the clathrin light chain family. Clathrin coats are formed from molecules containing 3 heavy chains and 3 light chains. Interacts (via N-terminus) with HIP1. Interacts with HIP1R.

Its subcellular location is the cytoplasmic vesicle membrane. The protein localises to the membrane. It is found in the coated pit. Its function is as follows. Clathrin is the major protein of the polyhedral coat of coated pits and vesicles. The polypeptide is Clathrin light chain B (Cltb) (Rattus norvegicus (Rat)).